A 264-amino-acid polypeptide reads, in one-letter code: 3-methyl-2-oxobutanoate hydroxymethyltransferase (264 aa).

2 residues coordinate Mg(2+): D45 and D84. 3-methyl-2-oxobutanoate is bound by residues D45–S46, D84, and K112. E114 serves as a coordination point for Mg(2+). Catalysis depends on E181, which acts as the Proton acceptor.

Belongs to the PanB family. Homodecamer; pentamer of dimers. Requires Mg(2+) as cofactor.

Its subcellular location is the cytoplasm. It carries out the reaction 3-methyl-2-oxobutanoate + (6R)-5,10-methylene-5,6,7,8-tetrahydrofolate + H2O = 2-dehydropantoate + (6S)-5,6,7,8-tetrahydrofolate. The protein operates within cofactor biosynthesis; (R)-pantothenate biosynthesis; (R)-pantoate from 3-methyl-2-oxobutanoate: step 1/2. Catalyzes the reversible reaction in which hydroxymethyl group from 5,10-methylenetetrahydrofolate is transferred onto alpha-ketoisovalerate to form ketopantoate. The sequence is that of 3-methyl-2-oxobutanoate hydroxymethyltransferase from Shigella boydii serotype 18 (strain CDC 3083-94 / BS512).